Reading from the N-terminus, the 125-residue chain is Large ribosomal subunit protein bL12 (125 aa).

It belongs to the bacterial ribosomal protein bL12 family. Homodimer. Part of the ribosomal stalk of the 50S ribosomal subunit. Forms a multimeric L10(L12)X complex, where L10 forms an elongated spine to which 2 to 4 L12 dimers bind in a sequential fashion. Binds GTP-bound translation factors.

Forms part of the ribosomal stalk which helps the ribosome interact with GTP-bound translation factors. Is thus essential for accurate translation. The protein is Large ribosomal subunit protein bL12 of Heliobacterium modesticaldum (strain ATCC 51547 / Ice1).